A 1070-amino-acid polypeptide reads, in one-letter code: DNA-directed RNA polymerase subunit beta (1070 aa).

It belongs to the RNA polymerase beta chain family. In terms of assembly, in plastids the minimal PEP RNA polymerase catalytic core is composed of four subunits: alpha, beta, beta', and beta''. When a (nuclear-encoded) sigma factor is associated with the core the holoenzyme is formed, which can initiate transcription.

It is found in the plastid. Its subcellular location is the chloroplast. The catalysed reaction is RNA(n) + a ribonucleoside 5'-triphosphate = RNA(n+1) + diphosphate. Functionally, DNA-dependent RNA polymerase catalyzes the transcription of DNA into RNA using the four ribonucleoside triphosphates as substrates. The protein is DNA-directed RNA polymerase subunit beta of Lotus japonicus (Lotus corniculatus var. japonicus).